A 421-amino-acid polypeptide reads, in one-letter code: Acetate kinase (421 aa).

Position 7 (Asn-7) interacts with Mg(2+). Lys-14 lines the ATP pocket. Arg-91 provides a ligand contact to substrate. Asp-148 functions as the Proton donor/acceptor in the catalytic mechanism. Residues 208-212 (HIGNG) and 283-285 (DRR) each bind ATP. Glu-387 is a binding site for Mg(2+).

It belongs to the acetokinase family. As to quaternary structure, homodimer. Mg(2+) is required as a cofactor. Requires Mn(2+) as cofactor.

It is found in the cytoplasm. It carries out the reaction acetate + ATP = acetyl phosphate + ADP. It participates in metabolic intermediate biosynthesis; acetyl-CoA biosynthesis; acetyl-CoA from acetate: step 1/2. Functionally, catalyzes the formation of acetyl phosphate from acetate and ATP. Can also catalyze the reverse reaction. The protein is Acetate kinase of Geobacter metallireducens (strain ATCC 53774 / DSM 7210 / GS-15).